Here is a 300-residue protein sequence, read N- to C-terminus: 2-methylisocitrate lyase (300 aa).

53–55 lines the substrate pocket; it reads SGD. Mg(2+) is bound by residues D92 and D94. Substrate-binding positions include 129–130, R162, E192, 214–216, R245, and R274; these read CG and NMT.

This sequence belongs to the isocitrate lyase/PEP mutase superfamily. Methylisocitrate lyase family. Mg(2+) serves as cofactor.

The enzyme catalyses 3-hydroxybutane-1,2,3-tricarboxylate = pyruvate + succinate. Its function is as follows. Involved in the methylcitric acid cycle. Catalyzes the cleavage of 2-methylisocitrate to yield pyruvate and succinate. The sequence is that of 2-methylisocitrate lyase from Halalkalibacterium halodurans (strain ATCC BAA-125 / DSM 18197 / FERM 7344 / JCM 9153 / C-125) (Bacillus halodurans).